Reading from the N-terminus, the 336-residue chain is tRNA N6-adenosine threonylcarbamoyltransferase (336 aa).

Fe cation is bound by residues His-112 and His-116. Residues 136-140 (LVSGG), Asp-169, Gly-182, and Asn-276 contribute to the substrate site. A Fe cation-binding site is contributed by Asp-304.

Belongs to the KAE1 / TsaD family. It depends on Fe(2+) as a cofactor.

Its subcellular location is the cytoplasm. The catalysed reaction is L-threonylcarbamoyladenylate + adenosine(37) in tRNA = N(6)-L-threonylcarbamoyladenosine(37) in tRNA + AMP + H(+). Required for the formation of a threonylcarbamoyl group on adenosine at position 37 (t(6)A37) in tRNAs that read codons beginning with adenine. Is involved in the transfer of the threonylcarbamoyl moiety of threonylcarbamoyl-AMP (TC-AMP) to the N6 group of A37, together with TsaE and TsaB. TsaD likely plays a direct catalytic role in this reaction. The protein is tRNA N6-adenosine threonylcarbamoyltransferase of Francisella tularensis subsp. novicida (strain U112).